The chain runs to 240 residues: 2,3,4,5-tetrahydropyridine-2,6-dicarboxylate N-acetyltransferase (240 aa).

Belongs to the transferase hexapeptide repeat family. DapH subfamily.

It carries out the reaction (S)-2,3,4,5-tetrahydrodipicolinate + acetyl-CoA + H2O = L-2-acetamido-6-oxoheptanedioate + CoA. It functions in the pathway amino-acid biosynthesis; L-lysine biosynthesis via DAP pathway; LL-2,6-diaminopimelate from (S)-tetrahydrodipicolinate (acetylase route): step 1/3. Its function is as follows. Catalyzes the transfer of an acetyl group from acetyl-CoA to tetrahydrodipicolinate. This chain is 2,3,4,5-tetrahydropyridine-2,6-dicarboxylate N-acetyltransferase, found in Bacillus cereus (strain G9842).